The following is a 461-amino-acid chain: ADP-specific phosphofructokinase (461 aa).

The region spanning 1-457 (MVRELLEKAR…FASYLAMLKE (457 aa)) is the ADPK domain. Residues Glu268, Glu298, and Asp441 each coordinate Mg(2+). The Proton acceptor role is filled by Asp441.

It belongs to the carbohydrate kinase PfkC family. It depends on Mg(2+) as a cofactor.

Its subcellular location is the cytoplasm. The enzyme catalyses beta-D-fructose 6-phosphate + ADP = beta-D-fructose 1,6-bisphosphate + AMP + H(+). The protein operates within carbohydrate degradation; glycolysis. Functionally, catalyzes the phosphorylation of fructose 6-phosphate to fructose 1,6-bisphosphate using ADP as the phosphate donor. The chain is ADP-specific phosphofructokinase from Thermococcus zilligii.